We begin with the raw amino-acid sequence, 152 residues long: Ferredoxin-thioredoxin reductase catalytic chain, chloroplastic (152 aa).

The transit peptide at 1 to 38 (MTSTVTTTVGCGGLPVRPLSTATRGRPRRCAVRAQAAG) directs the protein to the chloroplast. [4Fe-4S] cluster is bound at residue cysteine 91. Cysteine 93 serves as the catalytic Nucleophile. Cysteine 93 and cysteine 123 form a disulfide bridge. [4Fe-4S] cluster-binding residues include cysteine 110, cysteine 112, and cysteine 121.

The protein belongs to the ferredoxin thioredoxin reductase beta subunit family. In terms of assembly, heterodimer of subunit A (variable subunit) and subunit B (catalytic subunit). Heterodimeric FTR forms a complex with ferredoxin and thioredoxin. [4Fe-4S] cluster is required as a cofactor.

Its subcellular location is the plastid. The protein resides in the chloroplast. The enzyme catalyses [thioredoxin]-disulfide + 2 reduced [2Fe-2S]-[ferredoxin] + 2 H(+) = [thioredoxin]-dithiol + 2 oxidized [2Fe-2S]-[ferredoxin]. Functionally, catalytic subunit of the ferredoxin-thioredoxin reductase (FTR), which catalyzes the two-electron reduction of thioredoxins by the electrons provided by reduced ferredoxin. The polypeptide is Ferredoxin-thioredoxin reductase catalytic chain, chloroplastic (FTRC) (Zea mays (Maize)).